The primary structure comprises 504 residues: MEEFQGYLELDIFRQHDFLYPLIFREYSXXXAHGHGLNRYMLLENIGYDNKSSLLIVKRLITTMYQQNYLIISANDSKQNPFFGYNKNLHSKILSEGFAIIVEIPFYLRLISSLEGAEIVRFYNLRSIHSIFPFLEEKFPHLNYSADILIPYPAHLEILVQTLRYRVKDASYLHLLRFFLHEYSNCNSLIITNKSISIFSKSNPRFFLFLYNSYICEYESIFLFLRNQSSHLRLTSSGVLFERLCLYRKIEHFAEVFANDFPVIPCFLKDPFMHYVRYQGKSILASKDTPLLMNKWKSYLVNLWQCHFDVWSHAASIRINQLSKHSLDFLSYFSSVRRNPAVVRNQMLENSFLLNNAPNKLDTIVPIIPLIGSLAKAKFCNAVGHPISKLTRADLSDFEIINRFLHICRNLSHYYSGSSKKKNMYRIKYILRLSCVKTLARKHKSTARAFLKRVDSEFFQEFFTEEGGFISLIFPRASFALRRLYSGRVWYLDIIFINGLSNHE.

This sequence belongs to the intron maturase 2 family. MatK subfamily.

The protein resides in the plastid. It is found in the chloroplast. Functionally, usually encoded in the trnK tRNA gene intron. Probably assists in splicing its own and other chloroplast group II introns. The chain is Maturase K from Quercus robur (English oak).